The following is a 365-amino-acid chain: Probable caffeine synthase 5 (365 aa).

S-adenosyl-L-homocysteine is bound at residue Tyr-18. Thr-25 is a caffeine binding site. Positions 61, 66, 98, 99, 134, and 135 each coordinate S-adenosyl-L-homocysteine. Caffeine-binding residues include Tyr-152, His-155, and Trp-156. Asn-173, Asp-259, Phe-261, and Asn-262 together coordinate Mg(2+). Phe-317 serves as a coordination point for caffeine.

This sequence belongs to the methyltransferase superfamily. Type-7 methyltransferase family. Mg(2+) is required as a cofactor.

The protein operates within alkaloid biosynthesis. May be involved in the biosynthesis of caffeine. The sequence is that of Probable caffeine synthase 5 from Camellia sinensis (Tea plant).